Consider the following 367-residue polypeptide: 2-oxoisovalerate dehydrogenase subunit alpha (367 aa).

Substrate is bound by residues Phe66, Tyr95, 128–131 (MPEH), and Ser144. 94–96 (YYR) contributes to the thiamine diphosphate binding site. Residues 144–146 (SPI), 174–180 (GDGATSE), 204–208 (NFYAI), and His273 each bind thiamine diphosphate. Mg(2+) contacts are provided by Asp175, Asn204, and Tyr206.

It belongs to the BCKDHA family. In terms of assembly, heterotetramer of two alpha and two beta chains. Directly associated with ODBB in the E1 complex. The cofactor is thiamine diphosphate.

It carries out the reaction N(6)-[(R)-lipoyl]-L-lysyl-[protein] + 3-methyl-2-oxobutanoate + H(+) = N(6)-[(R)-S(8)-2-methylpropanoyldihydrolipoyl]-L-lysyl-[protein] + CO2. Functionally, the branched-chain alpha-keto dehydrogenase complex catalyzes the overall conversion of alpha-keto acids to acyl-CoA and CO(2). It contains multiple copies of three enzymatic components: branched-chain alpha-keto acid decarboxylase (E1), lipoamide acyltransferase (E2) and lipoamide dehydrogenase (E3). In Thermus thermophilus (strain ATCC 27634 / DSM 579 / HB8), this protein is 2-oxoisovalerate dehydrogenase subunit alpha.